We begin with the raw amino-acid sequence, 377 residues long: cAMP-dependent protein kinase type II regulatory subunit (377 aa).

Polar residues predominate over residues 48–69 (ERPSVSHTDQSTDDQLSVNSQD). A disordered region spans residues 48–78 (ERPSVSHTDQSTDDQLSVNSQDADAEPPVMA). Phosphoserine occurs at positions 51, 58, 64, 67, and 84. The short motif at 81-85 (RRKSV) is the Pseudophosphorylation motif element. Tyrosine 90 carries the post-translational modification Phosphotyrosine. 3',5'-cyclic AMP is bound by residues 124–239 (LFRS…LLNS), glutamate 189, arginine 198, 242–362 (MLKA…YESQ), glutamate 311, and arginine 320.

It belongs to the cAMP-dependent kinase regulatory chain family. In terms of assembly, tetramer, composed of 2 regulatory (R) and 2 catalytic (C) subunits. In the presence of cAMP it dissociates into 2 active monomeric C subunits and an R dimer. Interacts with Akap200. In terms of processing, the pseudophosphorylation site binds to the substrate-binding region of the catalytic chain but is not phosphorylated. The physiological significance of phosphorylations by other kinases is unclear. As to expression, detected in follicle cells, germline-derived cells, germline line stem cells and outer rim of ring canals of nurse cells throughout oogenesis (at protein level).

Its subcellular location is the cytoplasm. It localises to the cell membrane. Its function is as follows. Regulatory subunit of the cAMP-dependent protein kinases involved in cAMP signaling in cells. Mediates membrane association by binding to anchoring proteins, such as Akap200. Might play an essential role in the regulation of neuronal activity in the brain. The chain is cAMP-dependent protein kinase type II regulatory subunit (Pka-R2) from Drosophila melanogaster (Fruit fly).